Here is a 239-residue protein sequence, read N- to C-terminus: Fatty acid metabolism regulator protein (239 aa).

The HTH gntR-type domain occupies 6-74; the sequence is QSPAGFAEEY…HGKPTKVNNF (69 aa). Residues 34–53 constitute a DNA-binding region (H-T-H motif); the sequence is ERELSELIGVTRTTLREVLQ.

In terms of assembly, homodimer.

Its subcellular location is the cytoplasm. Its function is as follows. Multifunctional regulator of fatty acid metabolism. In Proteus mirabilis (strain HI4320), this protein is Fatty acid metabolism regulator protein.